The chain runs to 289 residues: 4-diphosphocytidyl-2-C-methyl-D-erythritol kinase (289 aa).

Lysine 10 is a catalytic residue. 94-104 is an ATP binding site; sequence PVAAGLAGGSS. Aspartate 136 is a catalytic residue.

Belongs to the GHMP kinase family. IspE subfamily.

The catalysed reaction is 4-CDP-2-C-methyl-D-erythritol + ATP = 4-CDP-2-C-methyl-D-erythritol 2-phosphate + ADP + H(+). The protein operates within isoprenoid biosynthesis; isopentenyl diphosphate biosynthesis via DXP pathway; isopentenyl diphosphate from 1-deoxy-D-xylulose 5-phosphate: step 3/6. In terms of biological role, catalyzes the phosphorylation of the position 2 hydroxy group of 4-diphosphocytidyl-2C-methyl-D-erythritol. The chain is 4-diphosphocytidyl-2-C-methyl-D-erythritol kinase from Bacillus licheniformis (strain ATCC 14580 / DSM 13 / JCM 2505 / CCUG 7422 / NBRC 12200 / NCIMB 9375 / NCTC 10341 / NRRL NRS-1264 / Gibson 46).